The following is a 399-amino-acid chain: P2X purinoceptor 1 (399 aa).

Over methionine 1–lysine 28 the chain is Cytoplasmic. A helical transmembrane segment spans residues valine 29–valine 50. Residues tyrosine 51–glycine 338 are Extracellular-facing. Lysine 68, lysine 70, and lysine 140 together coordinate CTP. Position 70 (lysine 70) interacts with ATP. Intrachain disulfides connect cysteine 117–cysteine 165, cysteine 126–cysteine 149, and cysteine 132–cysteine 159. Asparagine 153 and asparagine 184 each carry an N-linked (GlcNAc...) asparagine glycan. CTP is bound at residue threonine 186. Residue threonine 186 coordinates ATP. A glycan (N-linked (GlcNAc...) asparagine) is linked at asparagine 210. 2 cysteine pairs are disulfide-bonded: cysteine 217/cysteine 227 and cysteine 261/cysteine 270. ATP is bound by residues serine 286, asparagine 290, and arginine 292. Asparagine 290 and arginine 292 together coordinate CTP. Asparagine 300 carries an N-linked (GlcNAc...) asparagine glycan. Lysine 309 serves as a coordination point for CTP. An ATP-binding site is contributed by lysine 309. A pore-forming motif region spans residues threonine 331–glycine 338. The helical transmembrane segment at isoleucine 339–proline 358 threads the bilayer. At lysine 359–serine 399 the chain is on the cytoplasmic side. Positions methionine 374 to serine 399 are disordered. Positions alanine 385–serine 399 are enriched in polar residues. Serine 387 and serine 388 each carry phosphoserine. Threonine 389 carries the post-translational modification Phosphothreonine.

This sequence belongs to the P2X receptor family. Functional P2XRs are organized as homomeric and heteromeric trimers. Homotrimer. Forms heterodimer with P2RX2. Forms heterodimer with P2RX4. Forms heterodimer with P2RX5. In terms of tissue distribution, high levels in vas deferens and urinary bladder. Lower extent in spinal cord, coeliac ganglion, lung and spleen (probably in the smooth muscle part of both organs).

The protein localises to the cell membrane. It carries out the reaction Ca(2+)(in) = Ca(2+)(out). It catalyses the reaction K(+)(in) = K(+)(out). The enzyme catalyses Na(+)(in) = Na(+)(out). With respect to regulation, activated by low concentrations of ATP (&lt;1 uM). Undergoes rapid desensitisation. Sensitives to the ATP agonist:alpha/beta-methylene-ATP. Modulated by cholesterol. Its function is as follows. ATP-gated nonselective transmembrane cation channel permeable to potassium, sodium and with relatively high calcium permeability. Furthermore, CTP functions as a weak affinity agonist for P2RX1. Plays a role a role in urogenital, immune and cardiovascular function. Specifically, plays an important role in neurogenic contraction of smooth muscle of the vas deferens, and therefore is essential for normal male reproductive function. In addition, contributes to smooth muscle contractions of the urinary bladder. On platelets, contributes to platelet activation and aggregation and thereby, also to thrombosis. On neutrophils, it is involved in chemotaxis and in mitigating the activation of circulating cells. The polypeptide is P2X purinoceptor 1 (P2rx1) (Rattus norvegicus (Rat)).